The following is a 298-amino-acid chain: Zinc-alpha-2-glycoprotein (298 aa).

A signal peptide spans 1–20; sequence MVRMVPVLLSLLLLLGPAVP. Residue Gln21 is modified to Pyrrolidone carboxylic acid. The N-linked (GlcNAc...) (complex) asparagine glycan is linked to Asn109. The N-linked (GlcNAc...) asparagine glycan is linked to Asn112. Cystine bridges form between Cys123–Cys186 and Cys225–Cys280. N-linked (GlcNAc...) (complex) asparagine glycosylation is present at Asn128. Positions 207-292 constitute an Ig-like C1-type domain; it reads PSVVVTSHQA…QHSSLAQPLV (86 aa). Asn259 carries an N-linked (GlcNAc...) asparagine glycan.

Belongs to the MHC class I family. Interacts with PIP. N-glycosylated. N-glycan at Asn-128: Hex5HexNAc4. As to expression, blood plasma, seminal plasma, urine, saliva, sweat, epithelial cells of various human glands, liver.

Its subcellular location is the secreted. In terms of biological role, stimulates lipid degradation in adipocytes and causes the extensive fat losses associated with some advanced cancers. May bind polyunsaturated fatty acids. The protein is Zinc-alpha-2-glycoprotein (AZGP1) of Homo sapiens (Human).